The chain runs to 308 residues: Putative protein TIC 214 N-terminal part (308 aa).

A run of 6 helical transmembrane segments spans residues 18–38, 64–84, 87–107, 124–144, 172–192, and 215–235; these read IINS…FSIG, FITG…HLAL, PHTI…WNNH, LSIQ…HFIL, VGWL…LSWI, and IFSI…PSPI. Over residues 239-249 the composition is skewed to basic and acidic residues; it reads KLKETSEMEER. Residues 239-308 form a disordered region; it reads KLKETSEMEE…RDPSEWKGNI (70 aa). The segment covering 250 to 262 has biased composition (acidic residues); it reads GESEEETDVEIET. Positions 264–273 are enriched in basic and acidic residues; sequence SETKETKQEQ. The span at 275–293 shows a compositional bias: acidic residues; that stretch reads GSTEEDPSLCSEEQEDPDK. Basic and acidic residues predominate over residues 294 to 308; it reads LDETGRDPSEWKGNI.

It belongs to the TIC214 family. In terms of assembly, part of the Tic complex.

Its subcellular location is the plastid. It is found in the chloroplast inner membrane. Involved in protein precursor import into chloroplasts. May be part of an intermediate translocation complex acting as a protein-conducting channel at the inner envelope. This Piper cenocladum (Ant piper) protein is Putative protein TIC 214 N-terminal part.